The primary structure comprises 345 residues: S-adenosylmethionine:tRNA ribosyltransferase-isomerase (345 aa).

It belongs to the QueA family. In terms of assembly, monomer.

It localises to the cytoplasm. The enzyme catalyses 7-aminomethyl-7-carbaguanosine(34) in tRNA + S-adenosyl-L-methionine = epoxyqueuosine(34) in tRNA + adenine + L-methionine + 2 H(+). The protein operates within tRNA modification; tRNA-queuosine biosynthesis. In terms of biological role, transfers and isomerizes the ribose moiety from AdoMet to the 7-aminomethyl group of 7-deazaguanine (preQ1-tRNA) to give epoxyqueuosine (oQ-tRNA). In Anaeromyxobacter sp. (strain Fw109-5), this protein is S-adenosylmethionine:tRNA ribosyltransferase-isomerase.